The chain runs to 504 residues: 2,3-bisphosphoglycerate-independent phosphoglycerate mutase (504 aa).

The Mn(2+) site is built by Asp11 and Ser61. Ser61 acts as the Phosphoserine intermediate in catalysis. Residues His122, 152-153 (RD), Arg183, Arg189, 255-258 (RNDR), and Lys329 each bind substrate. Positions 396, 400, 437, 438, and 455 each coordinate Mn(2+).

The protein belongs to the BPG-independent phosphoglycerate mutase family. In terms of assembly, monomer. The cofactor is Mn(2+).

It carries out the reaction (2R)-2-phosphoglycerate = (2R)-3-phosphoglycerate. The protein operates within carbohydrate degradation; glycolysis; pyruvate from D-glyceraldehyde 3-phosphate: step 3/5. Catalyzes the interconversion of 2-phosphoglycerate and 3-phosphoglycerate. This chain is 2,3-bisphosphoglycerate-independent phosphoglycerate mutase, found in Bacteroides fragilis (strain YCH46).